The sequence spans 600 residues: Forkhead box protein O (600 aa).

A Phosphothreonine; by PKB/AKT1 modification is found at T49. Position 80 is a phosphoserine (S80). Residues 100 to 206 constitute a DNA-binding region (fork-head); it reads WGNLSYADLI…ETSRYEKRRG (107 aa). 4 disordered regions span residues 187–210, 222–283, 319–364, and 580–600; these read KSVR…RAKK, GLND…LEPD, QQGF…TPGY, and LNAR…SWVH. S195 is modified (phosphoserine; by PKB/AKT1). 2 stretches are compositionally biased toward polar residues: residues 226-235 and 261-270; these read ATPSPSSSVS and RASSNASSCG. Position 264 is a phosphoserine; by PKB/AKT1 (S264). A phosphoserine mark is found at S267, S268, and S273. Residues 330–342 show a composition bias toward pro residues; it reads TQPPPPPYQPPQP. The span at 343–354 shows a compositional bias: low complexity; the sequence is QQQQQQGQQPSP.

As to quaternary structure, interacts with melt.

The protein localises to the cytoplasm. It is found in the nucleus. Its function is as follows. Transcription factor involved in the regulation of the insulin signaling pathway. Consistently activates both the downstream target Thor\d4EBP and the feedback control target InR. Involved in negative regulation of the cell cycle, modulating cell growth and proliferation. In response to cellular stresses, such as nutrient deprivation or increased levels of reactive oxygen species, foxo is activated and inhibits growth through the action of target genes such as Thor. Foxo activated in the adult fat body can regulate lifespan in adults; an insulin peptide itself may function as one secondary messenger of insulin-regulated aging. Also regulates Lip4, homolog of human acid lipases, thereby acting as a key modulator of lipid metabolism by insulin signaling and integrates insulin responses to glucose and lipid homeostasis. This Drosophila ananassae (Fruit fly) protein is Forkhead box protein O.